A 407-amino-acid polypeptide reads, in one-letter code: MSIENKNTGVKKVVLAYSGGLDTSAIIPWLKENYDNCEIIAFCADVGQGEEELVGLTEKALASGASECHIVDLKEEFVKDYIYPTMATGAIYEGTYLLGTSMARPIIAKAQVEVARKVGADALCHGCTGKGNDQVRFEGCFAALAPDLKVIAPWREWTMQSREDLLDYLAERNIKTSASATKIYSRDANAFHISHEGGELEDPWNEPSKGVWTLTADPEDAPNQPEYVSLEVENGRVTKVNGEALTPYAALMKLNAIAAPHGVGRIDITENRLVGMKSRGCYETPGGTVMFAALRAIEELVLDKTSRTWREQVGAQMAHLVYDGRWFTPLCKSLLAASESLAESVNGEVVVKLYKGHAIAVKKRSPNSLYSEAFATFGEDQVYDQKHAEGFIRLYSLASRIRALNAK.

Residues A16–S24 and A44 contribute to the ATP site. L-citrulline-binding residues include Y96 and S101. G126 serves as a coordination point for ATP. T128, N132, and D133 together coordinate L-aspartate. N132 lines the L-citrulline pocket. L-citrulline contacts are provided by R136, S185, S194, E270, and Y282.

Belongs to the argininosuccinate synthase family. Type 1 subfamily. Homotetramer.

The protein resides in the cytoplasm. The enzyme catalyses L-citrulline + L-aspartate + ATP = 2-(N(omega)-L-arginino)succinate + AMP + diphosphate + H(+). The protein operates within amino-acid biosynthesis; L-arginine biosynthesis; L-arginine from L-ornithine and carbamoyl phosphate: step 2/3. The polypeptide is Argininosuccinate synthase (Shewanella putrefaciens (strain CN-32 / ATCC BAA-453)).